Reading from the N-terminus, the 376-residue chain is MADRQRWVIKIGSALLTNDGKGLDCALMQTWVDRMVALRERGIEVVIVSSGAVAEGMTRLGWSARPDSVHELQAAAAVGQMGLVQAWETRFQQHQLHTAQVLLTHDDLSDRKRYLNARSTLLTLLGFGVVPVVNENDTVVTDEIRFGDNDTLAALVANLVEADRLLILTDQEGLFDADPRSNADANLIREARASDPAIVRVAGGGGLLGRGGMATKVRAGKLAARSGAITTIASGRSPEVLIELADGQGPGTTLLPDTTPMNARKQWLAGHLQMRGRLVLDAGAVVRLREGGSSLLPVGVVDVFGQFSRGEMVACEDERGERVGCGLVNYDAADARRICRKKSAEIAGVLGFMNEEELIHRDNLVLMEAGSRVSGA.

An ATP-binding site is contributed by Lys10. Positions 50, 137, and 149 each coordinate substrate. 169-170 (TD) contributes to the ATP binding site. Residues 275-353 (RGRLVLDAGA…AEIAGVLGFM (79 aa)) enclose the PUA domain.

The protein belongs to the glutamate 5-kinase family.

The protein resides in the cytoplasm. It carries out the reaction L-glutamate + ATP = L-glutamyl 5-phosphate + ADP. Its pathway is amino-acid biosynthesis; L-proline biosynthesis; L-glutamate 5-semialdehyde from L-glutamate: step 1/2. Functionally, catalyzes the transfer of a phosphate group to glutamate to form L-glutamate 5-phosphate. This is Glutamate 5-kinase from Alcanivorax borkumensis (strain ATCC 700651 / DSM 11573 / NCIMB 13689 / SK2).